Here is a 225-residue protein sequence, read N- to C-terminus: UPF0758 protein swp_2203 (225 aa).

In terms of domain architecture, MPN spans 102 to 224; sequence ILSDPDLTRD…IVSFAERGWI (123 aa). His173, His175, and Asp186 together coordinate Zn(2+). A JAMM motif motif is present at residues 173–186; it reads HNHPSGIAEPSTAD.

The protein belongs to the UPF0758 family.

The polypeptide is UPF0758 protein swp_2203 (Shewanella piezotolerans (strain WP3 / JCM 13877)).